Here is an 84-residue protein sequence, read N- to C-terminus: Putative membrane protein insertion efficiency factor (84 aa).

Residues 63 to 84 form a disordered region; it reads LGGSGYDPPPPPKTPRKWKCEE.

The protein belongs to the UPF0161 family.

It is found in the cell inner membrane. In terms of biological role, could be involved in insertion of integral membrane proteins into the membrane. The protein is Putative membrane protein insertion efficiency factor of Caulobacter sp. (strain K31).